The chain runs to 338 residues: Phenylalanine--tRNA ligase alpha subunit (338 aa).

A Mg(2+)-binding site is contributed by glutamate 252.

The protein belongs to the class-II aminoacyl-tRNA synthetase family. Phe-tRNA synthetase alpha subunit type 1 subfamily. Tetramer of two alpha and two beta subunits. Mg(2+) is required as a cofactor.

It localises to the cytoplasm. It catalyses the reaction tRNA(Phe) + L-phenylalanine + ATP = L-phenylalanyl-tRNA(Phe) + AMP + diphosphate + H(+). The chain is Phenylalanine--tRNA ligase alpha subunit from Pseudomonas syringae pv. tomato (strain ATCC BAA-871 / DC3000).